Reading from the N-terminus, the 130-residue chain is Small ribosomal subunit protein uS9 (130 aa).

It belongs to the universal ribosomal protein uS9 family.

This Shewanella denitrificans (strain OS217 / ATCC BAA-1090 / DSM 15013) protein is Small ribosomal subunit protein uS9.